The chain runs to 643 residues: 1-deoxy-D-xylulose-5-phosphate synthase (643 aa).

Thiamine diphosphate contacts are provided by residues histidine 78 and 119 to 121 (AHS). Aspartate 150 is a binding site for Mg(2+). Thiamine diphosphate-binding positions include 151 to 152 (GA), asparagine 179, tyrosine 288, and glutamate 370. Asparagine 179 contributes to the Mg(2+) binding site.

It belongs to the transketolase family. DXPS subfamily. In terms of assembly, homodimer. Mg(2+) serves as cofactor. Requires thiamine diphosphate as cofactor.

The enzyme catalyses D-glyceraldehyde 3-phosphate + pyruvate + H(+) = 1-deoxy-D-xylulose 5-phosphate + CO2. The protein operates within metabolic intermediate biosynthesis; 1-deoxy-D-xylulose 5-phosphate biosynthesis; 1-deoxy-D-xylulose 5-phosphate from D-glyceraldehyde 3-phosphate and pyruvate: step 1/1. Its function is as follows. Catalyzes the acyloin condensation reaction between C atoms 2 and 3 of pyruvate and glyceraldehyde 3-phosphate to yield 1-deoxy-D-xylulose-5-phosphate (DXP). In Xanthobacter autotrophicus (strain ATCC BAA-1158 / Py2), this protein is 1-deoxy-D-xylulose-5-phosphate synthase.